The following is a 725-amino-acid chain: A-type inclusion protein A25 (725 aa).

2 coiled-coil regions span residues 418-521 and 547-719; these read GNSG…RNGK and EIDK…NAET. 4 consecutive repeat copies span residues 609 to 635, 636 to 663, 664 to 687, and 699 to 725. Residues 609–718 are 4 X approximate tandem repeats; it reads VRRELEEERR…CRRNNETNAE (110 aa).

It belongs to the poxviridae A25 protein family. In terms of assembly, interacts (via N-terminus) with protein A26.

Its subcellular location is the virion. Its function is as follows. Structural protein that forms a matrix surrounding the mature virion (MV) through interaction with protein A26. Presence of protein A25 in the virion structurally prevents direct virus-cell fusion mechanism. This is A-type inclusion protein A25 from Vaccinia virus (strain Western Reserve) (VACV).